A 318-amino-acid chain; its full sequence is Trans-prenyltransferase (318 aa).

The chain crosses the membrane as a helical span at residues 1–21 (MLHLIYISIIVVLIIILISYT). 3 residues coordinate isopentenyl diphosphate: Lys85, Arg88, and His122. Residues Asp129 and Asp135 each coordinate Mg(2+). Position 140 (Arg140) interacts with dimethylallyl diphosphate. Arg141 contacts isopentenyl diphosphate. Dimethylallyl diphosphate contacts are provided by Lys216, Thr217, and Gln254.

It belongs to the FPP/GGPP synthase family. Asfivirus trans-prenyltransferase subfamily. It depends on Mg(2+) as a cofactor.

The protein resides in the host endoplasmic reticulum. It localises to the host membrane. It catalyses the reaction isopentenyl diphosphate + dimethylallyl diphosphate = (2E)-geranyl diphosphate + diphosphate. The enzyme catalyses isopentenyl diphosphate + (2E)-geranyl diphosphate = (2E,6E)-farnesyl diphosphate + diphosphate. It carries out the reaction isopentenyl diphosphate + (2E,6E)-farnesyl diphosphate = (2E,6E,10E)-geranylgeranyl diphosphate + diphosphate. The catalysed reaction is isopentenyl diphosphate + (2E,6E,10E)-geranylgeranyl diphosphate = (2E,6E,10E,14E)-geranylfarnesyl diphosphate + diphosphate. It functions in the pathway isoprenoid biosynthesis; farnesyl diphosphate biosynthesis; farnesyl diphosphate from geranyl diphosphate and isopentenyl diphosphate: step 1/1. It participates in isoprenoid biosynthesis; geranyl diphosphate biosynthesis; geranyl diphosphate from dimethylallyl diphosphate and isopentenyl diphosphate: step 1/1. Its pathway is isoprenoid biosynthesis; geranylgeranyl diphosphate biosynthesis; geranylgeranyl diphosphate from farnesyl diphosphate and isopentenyl diphosphate: step 1/1. In terms of biological role, trans-prenyltransferase that catalyzes the sequential condensation of isopentenyl diphosphate (IPP) with different allylic diphosphates, such as dimethylallyl diphosphate (DMAPP), geranyl diphosphate (GPP), farnesyl diphosphate (FPP) and geranylgeranyl diphosphate (GGPP), farnesyl diphosphate being the best allylic substrate. The chain is Trans-prenyltransferase from African swine fever virus (isolate Tick/South Africa/Pretoriuskop Pr4/1996) (ASFV).